A 256-amino-acid polypeptide reads, in one-letter code: Diacetyl reductase [(S)-acetoin forming] (256 aa).

NAD(+)-binding positions include 6–33 (LVTGAGQGIGKAIALRLVKDGFAVAIAD) and Asp59. Ser139 serves as a coordination point for substrate. Tyr152 acts as the Proton acceptor in catalysis. Lys156 lines the NAD(+) pocket.

Belongs to the short-chain dehydrogenases/reductases (SDR) family. As to quaternary structure, homotetramer.

The catalysed reaction is (S)-acetoin + NAD(+) = diacetyl + NADH + H(+). In terms of biological role, catalyzes the reversible reduction of (S)-acetoin to 2,3-butanediol in the presence of NADH. In Klebsiella pneumoniae, this protein is Diacetyl reductase [(S)-acetoin forming] (budC).